The sequence spans 351 residues: MIIQRVVLNSRPGKNGNPVAENFRVEEFSLPDALNEGQVQVRTLYLSVDPYMRCKMNEDTGTDYLAPWQLAQVADGGGIGVVEESKHQKLTKGDFVTSFYWPWQTKAILDGNGLEKVDPQLVDGHLSYFLGAIGMPGLTSLIGVQEKGHISAGSNQTMVVSGAAGACGSLAGQIGHLLGCSRVVGICGTQEKCLFLTSELGFDAAVNYKTGNVAEQLREACPGGVDVYFDNVGGDISNAVISQMNENSHIILCGQISQYSNDVPYPPPLPPAVEAIRKERNITRERFTVLNYKDKFEPGILQLSQWFKEGKLKVKETMAKGLENMGVAFQSMMTGGNVGKQIVCISEDSSL.

Residue 99-100 participates in substrate binding; sequence FY. Residues 165 to 168, Lys192, Tyr208, Asn231, 253 to 259, 287 to 289, and Asn337 each bind NADP(+); these read GACG, CGQISQY, and FTV. 288–290 serves as a coordination point for substrate; sequence TVL.

This sequence belongs to the NADP-dependent oxidoreductase L4BD family. Monomer. Widely expressed with highest levels in adipose tissues.

Its subcellular location is the cytoplasm. It carries out the reaction 13,14-dihydro-15-oxo-prostaglandin E2 + NAD(+) = 15-oxoprostaglandin E2 + NADH + H(+). The enzyme catalyses 13,14-dihydro-15-oxo-prostaglandin E2 + NADP(+) = 15-oxoprostaglandin E2 + NADPH + H(+). It catalyses the reaction 13,14-dihydro-15-oxo-PGF2alpha + NADP(+) = 15-oxoprostaglandin F2alpha + NADPH + H(+). The catalysed reaction is 13,14-dihydro-15-oxo-prostaglandin E1 + NADP(+) = 15-oxoprostaglandin E1 + NADPH + H(+). It carries out the reaction 13,14-dihydro-15-oxo-prostaglandin F1alpha + NADP(+) = 15-oxoprostaglandin F1alpha + NADPH + H(+). Functions as 15-oxo-prostaglandin 13-reductase and acts on 15-keto-PGE1, 15-keto-PGE2, 15-keto-PGE1-alpha and 15-keto-PGE2-alpha with highest activity towards 15-keto-PGE2. Overexpression represses transcriptional activity of PPARG and inhibits adipocyte differentiation. This Mus musculus (Mouse) protein is Prostaglandin reductase 2.